Reading from the N-terminus, the 301-residue chain is Homoserine O-acetyltransferase (301 aa).

C142 functions as the Acyl-thioester intermediate in the catalytic mechanism. Substrate contacts are provided by K163 and S192. H235 functions as the Proton acceptor in the catalytic mechanism. E237 is an active-site residue. Residue R249 participates in substrate binding.

The protein belongs to the MetA family.

The protein localises to the cytoplasm. The catalysed reaction is L-homoserine + acetyl-CoA = O-acetyl-L-homoserine + CoA. It participates in amino-acid biosynthesis; L-methionine biosynthesis via de novo pathway; O-acetyl-L-homoserine from L-homoserine: step 1/1. Its function is as follows. Transfers an acetyl group from acetyl-CoA to L-homoserine, forming acetyl-L-homoserine. The chain is Homoserine O-acetyltransferase from Bacillus cereus (strain B4264).